A 385-amino-acid polypeptide reads, in one-letter code: Alkanesulfonate monooxygenase (385 aa).

The protein belongs to the SsuD family.

The enzyme catalyses an alkanesulfonate + FMNH2 + O2 = an aldehyde + FMN + sulfite + H2O + 2 H(+). In terms of biological role, catalyzes the desulfonation of aliphatic sulfonates. The protein is Alkanesulfonate monooxygenase of Paraburkholderia phymatum (strain DSM 17167 / CIP 108236 / LMG 21445 / STM815) (Burkholderia phymatum).